Consider the following 428-residue polypeptide: Histone deacetylase 3 (428 aa).

Positions 3–316 (KTVAYFYDPD…WTYETSLLVE (314 aa)) are histone deacetylase. His17, Gly21, and Lys25 together coordinate 1D-myo-inositol 1,4,5,6-tetrakisphosphate. His135 is a catalytic residue. Asp170, His172, and Asp259 together coordinate Zn(2+). Arg265 serves as a coordination point for 1D-myo-inositol 1,4,5,6-tetrakisphosphate. Basic and acidic residues-rich tracts occupy residues 388-405 (DRTD…ENYS) and 415-428 (DGDH…DVEI). Residues 388–428 (DRTDEADAEERGPEENYSRPEAPNEFYDGDHDNDKESDVEI) form a disordered region. Phosphoserine is present on Ser424.

Belongs to the histone deacetylase family. HD type 1 subfamily. Interacts with HDAC7 and HDAC9. Interacts with HDAC10, DAXX and DACH1. Found in a complex with NCOR1 and NCOR2. Component of the N-Cor repressor complex, at least composed of NCOR1, NCOR2, HDAC3, TBL1X, TBL1R, CORO2A and GPS2. Interacts with BCOR, MJD2A/JHDM3A, NRIP1, PRDM6 and SRY. Interacts with BTBD14B. Interacts with GLIS2. Interacts (via the DNA-binding domain) with NR2C1; the interaction recruits phosphorylated NR2C1 to PML bodies for sumoylation. Component of the Notch corepressor complex. Interacts with CBFA2T3 and NKAP. Interacts with APEX1; the interaction is not dependent on the acetylated status of APEX1. Interacts with and deacetylates MAPK14. Interacts with ZMYND15. Interacts with SMRT/NCOR2 and BCL6 on DNA enhancer elements. Interacts with INSM1. Interacts with XBP1; the interaction occurs in endothelial cell (EC) under disturbed flow. Interacts (via C-terminus) with CCAR2 (via N-terminus). Interacts with and deacetylates MEF2D. Interacts with BEND3. Interacts with NKAPL. Interacts with DHX36; this interaction occurs in a RNA-dependent manner. Interacts weakly with CRY1; this interaction is enhanced in the presence of FBXL3. Interacts with FBXL3 and BMAL1. Interacts with NCOR1. Interacts with RARA. Interacts with SETD5. Deubiquitinated on 'Lys-63'-linked ubiquitin chains by USP38; leading to a decreased level of histone acetylation. In terms of processing, sumoylated in vitro.

Its subcellular location is the nucleus. It localises to the chromosome. The protein localises to the cytoplasm. It is found in the cytosol. It catalyses the reaction N(6)-acetyl-L-lysyl-[histone] + H2O = L-lysyl-[histone] + acetate. The enzyme catalyses N(6)-acetyl-L-lysyl-[protein] + H2O = L-lysyl-[protein] + acetate. The catalysed reaction is N(6)-(2E)-butenoyl-L-lysyl-[protein] + H2O = (2E)-2-butenoate + L-lysyl-[protein]. It carries out the reaction N(6)-(2-hydroxyisobutanoyl)-L-lysyl-[protein] + H2O = 2-hydroxy-2-methylpropanoate + L-lysyl-[protein]. It catalyses the reaction N(6)-[(S)-lactoyl]-L-lysyl-[protein] + H2O = (S)-lactate + L-lysyl-[protein]. With respect to regulation, inositol tetraphosphate (1D-myo-inositol 1,4,5,6-tetrakisphosphate) promotes the histone deacetylase activity by acting as an intermolecular glue between HDAC3 and NCOR2, thereby promoting its association with the N-Cor complex, a prerequisite for the histone deacetylase activity. Its function is as follows. Histone deacetylase that catalyzes the deacetylation of lysine residues on the N-terminal part of the core histones (H2A, H2B, H3 and H4), and some other non-histone substrates. Histone deacetylation gives a tag for epigenetic repression and plays an important role in transcriptional regulation, cell cycle progression and developmental events. Histone deacetylases act via the formation of large multiprotein complexes, such as N-Cor repressor complex, which activate the histone deacetylase activity. Participates in the BCL6 transcriptional repressor activity by deacetylating the H3 'Lys-27' (H3K27) on enhancer elements, antagonizing EP300 acetyltransferase activity and repressing proximal gene expression. Acts as a molecular chaperone for shuttling phosphorylated NR2C1 to PML bodies for sumoylation. Contributes, together with XBP1 isoform 1, to the activation of NFE2L2-mediated HMOX1 transcription factor gene expression in a PI(3)K/mTORC2/Akt-dependent signaling pathway leading to endothelial cell (EC) survival under disturbed flow/oxidative stress. Regulates both the transcriptional activation and repression phases of the circadian clock in a deacetylase activity-independent manner. During the activation phase, promotes the accumulation of ubiquitinated BMAL1 at the E-boxes and during the repression phase, blocks FBXL3-mediated CRY1/2 ubiquitination and promotes the interaction of CRY1 and BMAL1. The NCOR1-HDAC3 complex regulates the circadian expression of the core clock gene BMAL1 and the genes involved in lipid metabolism in the liver. Also functions as a deacetylase for non-histone targets, such as KAT5, MEF2D, MAPK14, RARA and STAT3. Serves as a corepressor of RARA, mediating its deacetylation and repression, leading to inhibition of RARE DNA element binding. In association with RARA, plays a role in the repression of microRNA-10a and thereby in the inflammatory response. In addition to protein deacetylase activity, also acts as a protein-lysine deacylase by recognizing other acyl groups: catalyzes removal of (2E)-butenoyl (crotonyl), lactoyl (lactyl) and 2-hydroxyisobutanoyl (2-hydroxyisobutyryl) acyl groups from lysine residues, leading to protein decrotonylation, delactylation and de-2-hydroxyisobutyrylation, respectively. Catalyzes decrotonylation of MAPRE1/EB1. Mediates delactylation NBN/NBS1, thereby inhibiting DNA double-strand breaks (DSBs) via homologous recombination (HR). This is Histone deacetylase 3 (HDAC3) from Pongo abelii (Sumatran orangutan).